Reading from the N-terminus, the 270-residue chain is Gap junction beta-3 protein (270 aa).

The Cytoplasmic segment spans residues 1-20; sequence MDWKTLQALLSGVNKYSTAF. The helical transmembrane segment at 21-40 threads the bilayer; the sequence is GRIWLSVVFVFRVLVYVVAA. Over 41 to 75 the chain is Extracellular; that stretch reads ERVWGDEQKDFDCNTKQPGCTNVCYDNYFPISNIR. A helical transmembrane segment spans residues 76 to 98; that stretch reads LWALQLIFVTCPSLLVILHVAYR. At 99 to 126 the chain is on the cytoplasmic side; it reads EERERRHRQKHGDQCAKLYDNAGKKHGG. Residues 127-149 traverse the membrane as a helical segment; it reads LWWTYLFSLIFKLIIEFLFLYLL. Over 150-187 the chain is Extracellular; sequence HTLWHGFNMPRLVQCANVAPCPNIVDCYIARPTEKKIF. Residues 188–210 form a helical membrane-spanning segment; it reads TYFMVGASAVCIVLTICELCYLI. The Cytoplasmic portion of the chain corresponds to 211–270; that stretch reads CHRVLRGLHKDKPRGGCSPSSSASRASTCRCHHKLVEAGEVDPDPGNNKLQASAPNLTPI. The tract at residues 250–270 is disordered; it reads EVDPDPGNNKLQASAPNLTPI. Residues 258 to 270 are compositionally biased toward polar residues; it reads NKLQASAPNLTPI.

Belongs to the connexin family. Beta-type (group I) subfamily. A connexon is composed of a hexamer of connexins. Interacts with CNST.

It localises to the cell membrane. The protein localises to the cell junction. Its subcellular location is the gap junction. Its function is as follows. One gap junction consists of a cluster of closely packed pairs of transmembrane channels, the connexons, through which materials of low MW diffuse from one cell to a neighboring cell. This Homo sapiens (Human) protein is Gap junction beta-3 protein (GJB3).